A 220-amino-acid polypeptide reads, in one-letter code: Cytidylate kinase (220 aa).

9 to 17 serves as a coordination point for ATP; the sequence is GPAASGKST.

This sequence belongs to the cytidylate kinase family. Type 1 subfamily.

The protein localises to the cytoplasm. It catalyses the reaction CMP + ATP = CDP + ADP. The catalysed reaction is dCMP + ATP = dCDP + ADP. The chain is Cytidylate kinase from Thermotoga maritima (strain ATCC 43589 / DSM 3109 / JCM 10099 / NBRC 100826 / MSB8).